A 232-amino-acid polypeptide reads, in one-letter code: Small ribosomal subunit protein uS5 (232 aa).

Residues 1 to 47 (MAAEVTETAQPVETAASTDNNREQREPRRGGRERNPNRDRGNRDADK) form a disordered region. Polar residues predominate over residues 7–19 (ETAQPVETAASTD). A compositionally biased stretch (basic and acidic residues) spans 20–47 (NNREQREPRRGGRERNPNRDRGNRDADK). The 64-residue stretch at 50–113 (FLERVVTINR…EEAKKNFFRV (64 aa)) folds into the S5 DRBM domain.

This sequence belongs to the universal ribosomal protein uS5 family. In terms of assembly, part of the 30S ribosomal subunit. Contacts proteins S4 and S8.

In terms of biological role, with S4 and S12 plays an important role in translational accuracy. Located at the back of the 30S subunit body where it stabilizes the conformation of the head with respect to the body. The protein is Small ribosomal subunit protein uS5 of Leifsonia xyli subsp. xyli (strain CTCB07).